We begin with the raw amino-acid sequence, 506 residues long: Nucleosome assembly protein 1-like 3 (506 aa).

2 disordered regions span residues 1–95 (MAEA…LGTN) and 157–307 (PTEE…KRED). Residues 35-70 (SSSSSSSTSDSSSSSSTSGSSSGSGSSSSSSGSTSS) show a composition bias toward low complexity. The segment covering 157-178 (PTEEECEWNSEDEEFSSDEEVQ) has biased composition (acidic residues). A compositionally biased stretch (basic and acidic residues) spans 196 to 296 (PKENPEVKAE…ERLQDSVDLK (101 aa)).

It belongs to the nucleosome assembly protein (NAP) family.

Its subcellular location is the nucleus. The sequence is that of Nucleosome assembly protein 1-like 3 (NAP1L3) from Homo sapiens (Human).